Reading from the N-terminus, the 109-residue chain is Nucleoid-associated protein ETA_24730 (109 aa).

Belongs to the YbaB/EbfC family. As to quaternary structure, homodimer.

The protein localises to the cytoplasm. The protein resides in the nucleoid. Its function is as follows. Binds to DNA and alters its conformation. May be involved in regulation of gene expression, nucleoid organization and DNA protection. This Erwinia tasmaniensis (strain DSM 17950 / CFBP 7177 / CIP 109463 / NCPPB 4357 / Et1/99) protein is Nucleoid-associated protein ETA_24730.